A 191-amino-acid polypeptide reads, in one-letter code: MEYFDMRKMSVNLWRNAAGETREICTFPPAKRDFYWRASIASIAANGEFSLFPGMERIVTLLEGGEMFLESTDRFNHTLKPLQPFAFAADQVVKAKLTEGQMSMDFNIMTRLDVCKAKVRIAERTFTTFGSRGGVVFVINGAWQLGDKLLTTDQGACWFDGRHTLRLLQPQGKLLFSEINWLAGHSPDQVQ.

It belongs to the Ves family.

This is Protein Ves from Escherichia coli (strain ATCC 8739 / DSM 1576 / NBRC 3972 / NCIMB 8545 / WDCM 00012 / Crooks).